The following is a 358-amino-acid chain: 3-dehydroquinate synthase (358 aa).

NAD(+) contacts are provided by residues 70 to 75, 104 to 108, 128 to 129, K141, K150, and 168 to 171; these read DGEQYK, GVVGD, TT, and CLNT. E183, H246, and H263 together coordinate Zn(2+).

The protein belongs to the sugar phosphate cyclases superfamily. Dehydroquinate synthase family. Co(2+) is required as a cofactor. The cofactor is Zn(2+). It depends on NAD(+) as a cofactor.

The protein resides in the cytoplasm. It carries out the reaction 7-phospho-2-dehydro-3-deoxy-D-arabino-heptonate = 3-dehydroquinate + phosphate. The protein operates within metabolic intermediate biosynthesis; chorismate biosynthesis; chorismate from D-erythrose 4-phosphate and phosphoenolpyruvate: step 2/7. Catalyzes the conversion of 3-deoxy-D-arabino-heptulosonate 7-phosphate (DAHP) to dehydroquinate (DHQ). The chain is 3-dehydroquinate synthase from Shewanella sediminis (strain HAW-EB3).